We begin with the raw amino-acid sequence, 163 residues long: Nucleotide-binding protein NT01EI_1072 (163 aa).

Belongs to the YajQ family.

Its function is as follows. Nucleotide-binding protein. This is Nucleotide-binding protein NT01EI_1072 from Edwardsiella ictaluri (strain 93-146).